We begin with the raw amino-acid sequence, 366 residues long: Photosynthetic reaction center cytochrome c subunit (366 aa).

An N-terminal signal peptide occupies residues Met1–Gly22. The N-palmitoyl cysteine moiety is linked to residue Cys23. Residue Cys23 is the site of S-diacylglycerol cysteine attachment. Met94, Cys107, Cys110, His111, Met129, His143, Cys151, Cys154, His155, Met238, Cys249, Cys252, His253, Cys309, Cys312, and His313 together coordinate heme.

As to quaternary structure, component of the photosynthetic reaction center composed of protein subunits L (PufL), M (PufM), H (PuhA) and cytochrome C (PufC). The reaction center interacts with light-harvesting antenna complex LH1. In terms of processing, binds 4 heme groups per subunit.

Its subcellular location is the cellular chromatophore membrane. In terms of biological role, the reaction center of purple bacteria contains a tightly bound cytochrome molecule which re-reduces the photo oxidized primary electron donor. The sequence is that of Photosynthetic reaction center cytochrome c subunit (pufC) from Rubrivivax gelatinosus (strain NBRC 100245 / IL144).